Reading from the N-terminus, the 270-residue chain is Interleukin-2 receptor subunit alpha (270 aa).

The N-terminal stretch at 1–21 (MEPSLLMWGFFTFTMIPGCMA) is a signal peptide. The Sushi 1 domain maps to 22 to 84 (GACVQQPPSL…FWENKCQCMP (63 aa)). Over 22-245 (GACVQQPPSL…QPIIFTTQYQ (224 aa)) the chain is Extracellular. 3 cysteine pairs are disulfide-bonded: Cys24–Cys67, Cys49–Cys80, and Cys51–Cys82. Residues Asn33 and Asn70 are each glycosylated (N-linked (GlcNAc...) asparagine). The segment at 87–124 (SPRIPVKQVTPRPEEQKERKTTETQGQMQPPNQANLPG) is disordered. The segment covering 98–108 (RPEEQKERKTT) has biased composition (basic and acidic residues). The segment covering 112 to 121 (GQMQPPNQAN) has biased composition (polar residues). Residues 124-191 (GHCKEPPPWE…WTQPKLKCKS (68 aa)) enclose the Sushi 2 domain. Cystine bridges form between Cys126–Cys171 and Cys153–Cys189. Residues Asn164 and Asn195 are each glycosylated (N-linked (GlcNAc...) asparagine). The interval 190-225 (KSEKENGSFPEPQMSTAAPPTTKTSLPTRTKGTTDS) is disordered. The segment covering 202-225 (QMSTAAPPTTKTSLPTRTKGTTDS) has biased composition (polar residues). Asn227 carries an N-linked (GlcNAc...) asparagine glycan. Residues 246-264 (LAVAGCVLLLLSILLLSGL) traverse the membrane as a helical segment. Topologically, residues 265-270 (TWQRRR) are cytoplasmic.

Non-covalent dimer of an alpha and a beta subunit. IL2R exists in 3 different forms: a high affinity dimer, an intermediate affinity monomer (beta subunit), and a low affinity monomer (alpha subunit). The high and intermediate affinity forms also associate with a gamma subunit.

The protein resides in the membrane. In terms of biological role, receptor for interleukin-2. The receptor is involved in the regulation of immune tolerance by controlling regulatory T cells (TREGs) activity. TREGs suppress the activation and expansion of autoreactive T-cells. This is Interleukin-2 receptor subunit alpha (IL2RA) from Sus scrofa (Pig).